We begin with the raw amino-acid sequence, 207 residues long: NADH-quinone oxidoreductase subunit C (207 aa).

It belongs to the complex I 30 kDa subunit family. As to quaternary structure, NDH-1 is composed of 14 different subunits. Subunits NuoB, C, D, E, F, and G constitute the peripheral sector of the complex.

Its subcellular location is the cell inner membrane. It catalyses the reaction a quinone + NADH + 5 H(+)(in) = a quinol + NAD(+) + 4 H(+)(out). Its function is as follows. NDH-1 shuttles electrons from NADH, via FMN and iron-sulfur (Fe-S) centers, to quinones in the respiratory chain. The immediate electron acceptor for the enzyme in this species is believed to be ubiquinone. Couples the redox reaction to proton translocation (for every two electrons transferred, four hydrogen ions are translocated across the cytoplasmic membrane), and thus conserves the redox energy in a proton gradient. The polypeptide is NADH-quinone oxidoreductase subunit C (Bordetella pertussis (strain Tohama I / ATCC BAA-589 / NCTC 13251)).